The primary structure comprises 408 residues: GDSL esterase/lipase At1g54790 (408 aa).

The signal sequence occupies residues 1-24; it reads MNITKMKLFYVILFFISSLQISNS. S38 functions as the Nucleophile in the catalytic mechanism. N273, N289, and N361 each carry an N-linked (GlcNAc...) asparagine glycan. Residues D370 and H373 contribute to the active site.

This sequence belongs to the 'GDSL' lipolytic enzyme family.

The protein resides in the secreted. The polypeptide is GDSL esterase/lipase At1g54790 (Arabidopsis thaliana (Mouse-ear cress)).